Reading from the N-terminus, the 427-residue chain is Neuronal pentraxin-2 (427 aa).

The signal sequence occupies residues 1 to 17; that stretch reads MLALLAAGVAFAVVVLA. N144 and N185 each carry an N-linked (GlcNAc...) asparagine glycan. Residues 219–420 form the Pentraxin (PTX) domain; sequence DAFKVSLPFR…GASKWPVETC (202 aa). C249 and C309 are joined by a disulfide. Ca(2+) contacts are provided by N273, E351, Q352, D353, and Q363. N389 carries an N-linked (GlcNAc...) asparagine glycan.

Homooligomer or heterooligomer (probably pentamer) with neuronal pentraxin receptor (NPTXR). Ca(2+) is required as a cofactor. In terms of tissue distribution, testis specific.

The protein localises to the cytoplasmic vesicle. Its subcellular location is the secretory vesicle. The protein resides in the acrosome lumen. Functionally, may be involved in binding, concentrating, and sorting soluble glycoproteins or glycolipids that are destined for the acrosome. This Cavia porcellus (Guinea pig) protein is Neuronal pentraxin-2 (NPTX2).